The primary structure comprises 364 residues: tRNA 2-selenouridine synthase (364 aa).

The region spanning 14–137 (LLADTPLIDV…LRQTAIQATW (124 aa)) is the Rhodanese domain. Residue Cys97 is the S-selanylcysteine intermediate of the active site. A (2E)-geranyl diphosphate-binding site is contributed by Gly149.

This sequence belongs to the SelU family. Monomer.

The enzyme catalyses 5-methylaminomethyl-2-thiouridine(34) in tRNA + selenophosphate + (2E)-geranyl diphosphate + H2O + H(+) = 5-methylaminomethyl-2-selenouridine(34) in tRNA + (2E)-thiogeraniol + phosphate + diphosphate. It catalyses the reaction 5-methylaminomethyl-2-thiouridine(34) in tRNA + (2E)-geranyl diphosphate = 5-methylaminomethyl-S-(2E)-geranyl-thiouridine(34) in tRNA + diphosphate. It carries out the reaction 5-methylaminomethyl-S-(2E)-geranyl-thiouridine(34) in tRNA + selenophosphate + H(+) = 5-methylaminomethyl-2-(Se-phospho)selenouridine(34) in tRNA + (2E)-thiogeraniol. The catalysed reaction is 5-methylaminomethyl-2-(Se-phospho)selenouridine(34) in tRNA + H2O = 5-methylaminomethyl-2-selenouridine(34) in tRNA + phosphate. Its function is as follows. Involved in the post-transcriptional modification of the uridine at the wobble position (U34) of tRNA(Lys), tRNA(Glu) and tRNA(Gln). Catalyzes the conversion of 2-thiouridine (S2U-RNA) to 2-selenouridine (Se2U-RNA). Acts in a two-step process involving geranylation of 2-thiouridine (S2U) to S-geranyl-2-thiouridine (geS2U) and subsequent selenation of the latter derivative to 2-selenouridine (Se2U) in the tRNA chain. This is tRNA 2-selenouridine synthase from Salmonella typhimurium (strain LT2 / SGSC1412 / ATCC 700720).